We begin with the raw amino-acid sequence, 208 residues long: Thymidylate kinase (208 aa).

7-14 (GIDGAGKT) contacts ATP.

The protein belongs to the thymidylate kinase family.

The catalysed reaction is dTMP + ATP = dTDP + ADP. Its function is as follows. Phosphorylation of dTMP to form dTDP in both de novo and salvage pathways of dTTP synthesis. In Xylella fastidiosa (strain 9a5c), this protein is Thymidylate kinase (tmk).